The chain runs to 1037 residues: Mediator of RNA polymerase II transcription subunit 14 (1037 aa).

This sequence belongs to the Mediator complex subunit 14 family. In terms of assembly, component of the Mediator complex.

Its subcellular location is the nucleus. Its function is as follows. Component of the Mediator complex, a coactivator involved in the regulated transcription of nearly all RNA polymerase II-dependent genes. Mediator functions as a bridge to convey information from gene-specific regulatory proteins to the basal RNA polymerase II transcription machinery. Mediator is recruited to promoters by direct interactions with regulatory proteins and serves as a scaffold for the assembly of a functional preinitiation complex with RNA polymerase II and the general transcription factors. The chain is Mediator of RNA polymerase II transcription subunit 14 (RGR1) from Candida glabrata (strain ATCC 2001 / BCRC 20586 / JCM 3761 / NBRC 0622 / NRRL Y-65 / CBS 138) (Yeast).